The chain runs to 224 residues: ATP-dependent dethiobiotin synthetase BioD (224 aa).

14 to 19 (GIGKTV) lines the ATP pocket. Residue Thr-18 coordinates Mg(2+). The active site involves Lys-39. Ser-43 serves as a coordination point for substrate. Residues Asp-56, 117–120 (EGVG), and 177–178 (NE) contribute to the ATP site. Residues Asp-56 and Glu-117 each coordinate Mg(2+).

This sequence belongs to the dethiobiotin synthetase family. As to quaternary structure, homodimer. The cofactor is Mg(2+).

The protein localises to the cytoplasm. The catalysed reaction is (7R,8S)-7,8-diammoniononanoate + CO2 + ATP = (4R,5S)-dethiobiotin + ADP + phosphate + 3 H(+). It participates in cofactor biosynthesis; biotin biosynthesis; biotin from 7,8-diaminononanoate: step 1/2. In terms of biological role, catalyzes a mechanistically unusual reaction, the ATP-dependent insertion of CO2 between the N7 and N8 nitrogen atoms of 7,8-diaminopelargonic acid (DAPA, also called 7,8-diammoniononanoate) to form a ureido ring. The chain is ATP-dependent dethiobiotin synthetase BioD from Xanthomonas campestris pv. campestris (strain ATCC 33913 / DSM 3586 / NCPPB 528 / LMG 568 / P 25).